The chain runs to 338 residues: Flap endonuclease 1 (338 aa).

Residues 1 to 98 (MGTDIGDLLQ…ETLNRRKEVR (98 aa)) are N-domain. Residues Asp-27, Asp-80, Glu-152, Glu-154, Asp-173, Asp-175, and Asp-236 each contribute to the Mg(2+) site. The interval 116–257 (AAYKYAQASS…TALKLIKKHG (142 aa)) is I-domain. The segment at 330 to 338 (RQQTLDQWF) is interaction with PCNA.

Belongs to the XPG/RAD2 endonuclease family. FEN1 subfamily. In terms of assembly, interacts with PCNA. PCNA stimulates the nuclease activity without altering cleavage specificity. Requires Mg(2+) as cofactor.

In terms of biological role, structure-specific nuclease with 5'-flap endonuclease and 5'-3' exonuclease activities involved in DNA replication and repair. During DNA replication, cleaves the 5'-overhanging flap structure that is generated by displacement synthesis when DNA polymerase encounters the 5'-end of a downstream Okazaki fragment. Binds the unpaired 3'-DNA end and kinks the DNA to facilitate 5' cleavage specificity. Cleaves one nucleotide into the double-stranded DNA from the junction in flap DNA, leaving a nick for ligation. Also involved in the base excision repair (BER) pathway. Acts as a genome stabilization factor that prevents flaps from equilibrating into structures that lead to duplications and deletions. Also possesses 5'-3' exonuclease activity on nicked or gapped double-stranded DNA. The sequence is that of Flap endonuclease 1 from Methanosarcina barkeri (strain Fusaro / DSM 804).